A 2116-amino-acid chain; its full sequence is MEKLLDEVLAPGGPYNLTVGSWVRDHVRSIVEGAWEVRDVVTAAQKRAIVAVIPRPVFTQMQVSDHPALHAISRYTRRHWIEWGPKEALHVLIDPSPGLLREVARVERRWVALCLHRTARKLATALAETASEAWHADYVCALRGAPSGPFYVHPEDVPHGGRAVADRCLLYYTPMQMCELMRTIDATLLVAVDLWPVALAAHVGDDWDDLGIAWHLDHDGGCPADCRGAGAGPTPGYTRPCTTRIYQVLPDTAHPGRLYRCGPRLWTRDCAVAELSWEVAQHCGHQARVRAVRCTLPIRHVRSLQPSARVRLPDLVHLAEVGWWRWFSLPRPVFQRMLSYCKTLSPDAYYSERVFKFKNALSHSITLAGNVLQEGWKGTCAEEDALCAYVAFRAWQSNARLAGIMKSAKRCAADSLSVAGWLDTIWDAIKRFFGSVPLAERMEEWEQDAAVAAFDRGPLEDGGRHLDTVQPPKSPPRPEIAATWIVHAASADRHCACAPRCDVPRERPSAPAGPPDDEALIPPWLFAERRALRCREWDFEALRARADTAAAPAPLAPRPARYPTVLYRHPAHHGPWLTLDEPGGADAALVLCDPLGQPLRGPERHYAAGAHMCAQARGLQAFVRVVPPPERPWADGGARAWAKFFRGCAWAQRLLGEPAVMHLPYTDGDVPKLIALALRTLAQQGAALALSVRDLPRGTAFEANAVTAAVRAGPGQLAATSPPPGDPPPPRRARRSQRHSDARGTPPPAPVRDPPRPQPSPPAPPRVGDPVPPTTAEPADRARHAELEVVYEPSGPPTSTKADPDSDIVESYARAAGPVHLRVRDIMDPPPGCKVVVNAANEGLLAGSGVCGAIFANATAALAADCRRLAPCPIGEAVATPGHGCGYTHIIHAVAPRRPRDPAALEEGEALLERAYRSIVALAAARRWARVACPLLGAGVYGWSAAESLRAALAATRAEPAERVSLHICHPDRATLTHASVLVGAGLAARRVSPPPTEPLASCPAGDPGRPAQRSASPPATPLGDATAPEPRGCQGCELCRYTRVTNDRAYVNLWLERDRGATSWAMRIPEVVVYGPEHLATHFPLNHYSVLKPAEVRPPRGMCGSDMWRCRGWQGMPQVRCTPSNAHAALCRTGVPPRVSTRGGELDPNTCWLRAAANVAQAARACGAYTSAGCPKCAYGRALSEARTHEDFAALSQWWSASHADASPDGTGDPLDPLMETVGCACSRVWVGSEHEAPPDHLLVSLHRAPNGPWGVVLEVRARPEGGNPTGHFVCAVGGGPRRVSDRPHLWLAVPLSRGGGTCAATDEGLAQAYYDDLEVRRLGDDAMARAALASIQRPRKGPYNIRVWNMAAGAGKTTRILAAFTREDLYVCPTNALLHEIQAKLRARDIDIKNAATYERALTKPLAAYRRIYIDEAFTLGGEYCAFVASQTTAEVICVGDRDQCGPHYANNCRTPVPDRWPTGRSRHTWRFPDCWAARLRAGLDYDIEGERTGTFACNLWDGRQVDLHLAFSRETVRRLHEAGIRAYTVREAQGMSVGTACIHVGRDGTDVALALTRDLAIVSLTRASDALYLHELEDGLLRAAGLSAFLDAGALAELKEVPAGIDRVVAVEQAPPPLPPADGIPEAQDVPPFCPRTLEELVFGRAGHPHYADLNRVTEGEREVRYMRISRHLLNKNHTEMPGTERVLSAVCAVRRYRAGEDGSTLRTAVARQHPRPFRQIPPPRVTAGVAQEWRMTYLRERIDLTDVYTQMGVAARELTDRYTRRYPEIFAGMCTAQSLSVPAFLKATLKCVDAALGPRDTEDCHAAQGKAGLEIRAWAKEWVQVMSPHFRAIQKIIMRALRPQFLVAAGHTEPEVDAWWQAHYTTNAIEVDFTEFDMNQTLATRDVELEISAALLGLPCAEDYRALRAGSYCTLRELGSTETGCERTSGEPATLLHNTTVAMCMAMRMVPKGVRWAGIFQGDDMVIFLPEGARNAALKWTPAEVGLFGFHIPVKHVSTPTPSFCGHVGTAAGLFHDVMHQAIKVLCRRFDPDVLEEQQVALLDRLRGVYAALPDTVAANAAYYDYSAERVLAIVRELTAYARGRGLDHPATIGALEEIQTPYARANLHDAD.

Positions 36 to 49 (EVRDVVTAAQKRAI) are required for efficient proteolysis and P150-P90 interaction. In terms of domain architecture, Alphavirus-like MT spans 57 to 247 (VFTQMQVSDH…TRPCTTRIYQ (191 aa)). Residues 715–779 (GQLAATSPPP…PVPPTTAEPA (65 aa)) are disordered. 2 stretches are compositionally biased toward pro residues: residues 721–730 (SPPPGDPPPP) and 745–775 (TPPP…PPTT). Short sequence motifs (pxxPxR; class II SH3-binding) lie at residues 727 to 732 (PPPPRR), 747 to 752 (PPAPVR), and 761 to 766 (PPAPPR). Residues 806–985 (SDIVESYARA…LTHASVLVGA (180 aa)) enclose the Macro domain. Positions 992–1031 (VSPPPTEPLASCPAGDPGRPAQRSASPPATPLGDATAPEP) are disordered. Positions 1000–1301 (LASCPAGDPG…WLAVPLSRGG (302 aa)) constitute a Peptidase C27 domain. Cysteine 1152 (for cysteine protease activity) is an active-site residue. The interval 1152 to 1183 (CWLRAAANVAQAARACGAYTSAGCPKCAYGRA) is interaction with host CALM1. The Zn(2+) site is built by cysteine 1175, cysteine 1178, cysteine 1227, and histidine 1273. The segment at 1193–1228 (FAALSQWWSASHADASPDGTGDPLDPLMETVGCACS) is EF-hand-like. Histidine 1273 (for cysteine protease activity) is an active-site residue. Residues 1320–1468 (EVRRLGDDAM…VPDRWPTGRS (149 aa)) form the (+)RNA virus helicase ATP-binding domain. Residue 1352 to 1359 (MAAGAGKT) participates in a ribonucleoside 5'-triphosphate binding. In terms of domain architecture, (+)RNA virus helicase C-terminal spans 1469-1609 (RHTWRFPDCW…ELKEVPAGID (141 aa)). The tract at residues 1700 to 1900 (YRAGEDGSTL…VELEISAALL (201 aa)) is involved in P150-P90 interaction. The RdRp catalytic domain maps to 1870–1981 (TNAIEVDFTE…FLPEGARNAA (112 aa)). The Human RB1 binding motif lies at 1902 to 1906 (LPCAE).

Interacts with RNA-directed RNA polymerase p90. Interacts with host CALM1; this interaction is necessary for the protease activity and viral infectivity. Interacts with host C1QBP. Interacts with the capsid protein. As to quaternary structure, interacts with human RB1/retinoblastoma protein. Interacts with protease/methyltransferase p150. Requires Zn(2+) as cofactor. In terms of processing, specific enzymatic cleavage by its own cysteine protease yield mature proteins p150 and p90.

Its subcellular location is the host membrane. The protein localises to the host cytoplasm. It localises to the host perinuclear region. The enzyme catalyses RNA(n) + a ribonucleoside 5'-triphosphate = RNA(n+1) + diphosphate. It catalyses the reaction a ribonucleoside 5'-triphosphate + H2O = a ribonucleoside 5'-diphosphate + phosphate + H(+). The catalysed reaction is ATP + H2O = ADP + phosphate + H(+). Its function is as follows. Probable principal replicase for the negative-strand DNA, which replicates the 40S (+) genomic RNA into (-) antigenomic RNA. It cannot replicate the (-) into (+) until cleaved into p150 and p90 mature proteins. Protease that cleaves the precursor polyprotein into two mature products. Together with RNA-directed RNA polymerase p90, replicates the 40S genomic and antigenomic RNA by recognizing replications specific signals. The heterodimer P150/p90 is probably the principal replicase for positive-strand genomic RNA and the 24S subgenomic RNA, which codes for structural proteins. Responsible for the mRNA-capping of the viral mRNAs. This function is necessary since all viral RNAs are synthesized in the cytoplasm, and host capping enzymes are restricted to the nucleus. Forms fibers late in the infection that may be involved in cell-to-cell spread of the virus RNA in the absence of virus particle formation. In terms of biological role, together with protease/methyltransferase p150, replicates the 40S genomic and antigenomic RNA by recognizing replications specific signals. The heterodimer P150/p90 is probably the principal replicase for positive-strand genomic RNA and the 24S subgenomic RNA, which codes for structural proteins. A helicase activity is probably also present. The protein is Non-structural polyprotein p200 of Rubella virus (strain M33) (RUBV).